Consider the following 583-residue polypeptide: 2-succinyl-5-enolpyruvyl-6-hydroxy-3-cyclohexene-1-carboxylate synthase (583 aa).

It belongs to the TPP enzyme family. MenD subfamily. As to quaternary structure, homodimer. Mg(2+) is required as a cofactor. The cofactor is Mn(2+). Requires thiamine diphosphate as cofactor.

It catalyses the reaction isochorismate + 2-oxoglutarate + H(+) = 5-enolpyruvoyl-6-hydroxy-2-succinyl-cyclohex-3-ene-1-carboxylate + CO2. Its pathway is quinol/quinone metabolism; 1,4-dihydroxy-2-naphthoate biosynthesis; 1,4-dihydroxy-2-naphthoate from chorismate: step 2/7. The protein operates within quinol/quinone metabolism; menaquinone biosynthesis. Its function is as follows. Catalyzes the thiamine diphosphate-dependent decarboxylation of 2-oxoglutarate and the subsequent addition of the resulting succinic semialdehyde-thiamine pyrophosphate anion to isochorismate to yield 2-succinyl-5-enolpyruvyl-6-hydroxy-3-cyclohexene-1-carboxylate (SEPHCHC). This is 2-succinyl-5-enolpyruvyl-6-hydroxy-3-cyclohexene-1-carboxylate synthase from Roseiflexus sp. (strain RS-1).